Consider the following 352-residue polypeptide: ATP synthase subunit a 2 (352 aa).

An N-terminal signal peptide occupies residues 1–26; sequence MRKKAISRILALVVPVLLSLNSQAFA. Helical transmembrane passes span 112 to 132, 172 to 192, 195 to 215, 232 to 252, 264 to 284, 289 to 309, and 310 to 330; these read VVMIWLAAILLVVIASAAGAS, FLPYLLTVFFFILVCNLLGLI, GATATGNINVTLTLSVFTFVI, HLTAGTHWALWIIMVPIEILG, LFANMTAGHIIILSLFFISFI, IVAVAVSIPFAIFIYLLELFV, and AFLQAYVFTMLSALFIGLATA.

It belongs to the ATPase A chain family. In terms of assembly, F-type ATPases have 2 components, CF(1) - the catalytic core - and CF(0) - the membrane proton channel. CF(1) has five subunits: alpha(3), beta(3), gamma(1), delta(1), epsilon(1). CF(0) has four main subunits: a, b, b' and c.

It is found in the cell inner membrane. Functionally, key component of the proton channel; it plays a direct role in the translocation of protons across the membrane. The chain is ATP synthase subunit a 2 from Chlorobaculum tepidum (strain ATCC 49652 / DSM 12025 / NBRC 103806 / TLS) (Chlorobium tepidum).